A 100-amino-acid polypeptide reads, in one-letter code: C-X-C motif chemokine 11 (100 aa).

The N-terminal stretch at 1-21 (MNRKVTAIALAAIIWATAAQG) is a signal peptide. 2 disulfide bridges follow: cysteine 30–cysteine 57 and cysteine 32–cysteine 74.

This sequence belongs to the intercrine alpha (chemokine CxC) family. As to quaternary structure, interacts with TNFAIP6 (via Link domain).

It is found in the secreted. Functionally, chemotactic for interleukin-activated T-cells but not unstimulated T-cells, neutrophils or monocytes. Induces calcium release in activated T-cells. Binds to CXCR3. May play an important role in CNS diseases which involve T-cell recruitment. May play a role in skin immune responses. This Mus musculus (Mouse) protein is C-X-C motif chemokine 11 (Cxcl11).